Here is a 256-residue protein sequence, read N- to C-terminus: Ribonuclease 3 (256 aa).

Residues 3 to 125 (LDALQQRLGY…IVGAVFLDAG (123 aa)) form the RNase III domain. Glu-38 is a Mg(2+) binding site. Asp-42 is an active-site residue. Residues Asp-111 and Glu-114 each coordinate Mg(2+). Glu-114 is a catalytic residue. A DRBM domain is found at 152 to 222 (DAKTLLQEYL…AKLALDEVQK (71 aa)). Residues 229-256 (KRSRAERTGKTRKQPQPQDPQLSLRLKE) are disordered.

Belongs to the ribonuclease III family. As to quaternary structure, homodimer. Requires Mg(2+) as cofactor.

It localises to the cytoplasm. It carries out the reaction Endonucleolytic cleavage to 5'-phosphomonoester.. Its function is as follows. Digests double-stranded RNA. Involved in the processing of primary rRNA transcript to yield the immediate precursors to the large and small rRNAs (23S and 16S). Processes some mRNAs, and tRNAs when they are encoded in the rRNA operon. Processes pre-crRNA and tracrRNA of type II CRISPR loci if present in the organism. This is Ribonuclease 3 from Cupriavidus taiwanensis (strain DSM 17343 / BCRC 17206 / CCUG 44338 / CIP 107171 / LMG 19424 / R1) (Ralstonia taiwanensis (strain LMG 19424)).